A 514-amino-acid chain; its full sequence is piRNA biogenesis protein EXD1 (514 aa).

In terms of domain architecture, 3'-5' exonuclease spans 30–122; sequence LHAERTWMEK…HGKLCWLQVA (93 aa). A disordered region spans residues 384–422; it reads SLNKQATNPQHLPPTEEGETSEDSSNKLICTKSKGSEDQ.

This sequence belongs to the EXD1 family. Homodimer. Component of the PET complex, at least composed of EXD1, PIWIL2, TDRD12 and piRNAs.

The protein resides in the cytoplasm. RNA-binding component of the PET complex, a multiprotein complex required for the processing of piRNAs during spermatogenesis. The piRNA metabolic process mediates the repression of transposable elements during meiosis by forming complexes composed of piRNAs and Piwi proteins and governs the methylation and subsequent repression of transposable elements, preventing their mobilization, which is essential for the germline integrity. The PET complex is required during the secondary piRNAs metabolic process for the PIWIL2 slicing-triggered loading of PIWIL4 piRNAs. In the PET complex, EXD1 probably acts as an RNA adapter. EXD1 is an inactive exonuclease. The polypeptide is piRNA biogenesis protein EXD1 (EXD1) (Homo sapiens (Human)).